The sequence spans 918 residues: MEGSLVQSAIAPTIYRRSGTARFRVRARATMMRTMPTRTLTLGGFQGLRQTNFLDSRSVIKRDFGSIVASQISRPRGLGSRGVVRAMFERFTEKAIKVIMLAQEEARRLGHNFVGTEQILLGLIGEGTGIAAKVLKSMGINLKDARVEVEKIIGRGSGFVAVEIPFTPRAKRVLELSLEEARQLGHNYIGSEHLLLGLLREGEGVAARVLESLGADPNNIRTQVIRMVGESTEAVGAGVGGGSSGQKMPTLEEYGTNLTKLAEEGKLDPVVGRQDQIERVTQILGRRTKNNPCLIGEPGVGKTAIAEGLAQRISNGDVPETIEGKKVITLDMGLLVAGTKYRGEFEERLKKLMEEIKQNDDIILFIDEVHTLIGAGAAEGAIDAANILKPALARGELQCIGATTLDEYRKHIEKDPALERRFQPVKVPEPTVDETIQILRGLRERYELHHKLRYTDDSLIAAAQLSYQYISDRFLPDKAIDLIDEAGSRVRLRHAQLPDEAKELDKELRQVTKDKNEAVRGQDFEKAGELRDREMELKAQITAIIDKSKEMVKAETESGEVGPLVTEADIQHIVSSWTGIPVEKVSSDESDRLLKMEETLHTRIIGQDEAVKAISRAIRRARVGLKNPNRPIASFIFSGPTGVGKSELAKALAAYYFGSEEAMIRLDMSEFMERHTVSKLIGSPPGYVGYTEGGQLTEAVRRRPYTVVLFDEIEKAHPDVFNMMLQILEDGRLTDSKGRTVDFKNTLLIMTSNVGSSVIEKGGRKIGFDLDYDEKDTSYNRIKSLVTEELKQYFRPEFLNRLDEMIVFRQLTKLEVKEIADIMLKEVFDRLKAKDIDLQVTEKFRDRVVDEGYNPSYGARPLRRAIMRLLEDSLAEKMLAGEVKEGDSAIVDVDSEGKVIVLNGGSGVPEPLAPALSV.

The 143-residue stretch at 88-230 (FERFTEKAIK…RTQVIRMVGE (143 aa)) folds into the Clp R domain. 2 repeat regions span residues 91 to 156 (FTEK…IGRG) and 166 to 230 (FTPR…MVGE). Residues 251–498 (LEEYGTNLTK…RVRLRHAQLP (248 aa)) are i. 296–303 (GEPGVGKT) contributes to the ATP binding site. A UVR domain is found at 505 to 540 (DKELRQVTKDKNEAVRGQDFEKAGELRDREMELKAQ). Positions 565 to 756 (VTEADIQHIV…LLIMTSNVGS (192 aa)) are II. 639–646 (GPTGVGKS) contacts ATP.

The protein belongs to the ClpA/ClpB family. ClpC subfamily. As to expression, widely expressed.

The protein resides in the plastid. It is found in the chloroplast. Molecular chaperone that may interact with a ClpP-like protease involved in degradation of denatured proteins in the chloroplast. The polypeptide is Chaperone protein ClpC1, chloroplastic (CLPC1) (Oryza sativa subsp. japonica (Rice)).